The sequence spans 66 residues: Vesicular acetylcholine transporter (66 aa).

Residues 1 to 15 (GMGLANLLYAPVLLL) traverse the membrane as a helical segment. The Cytoplasmic segment spans residues 16–66 (LRNVGLLTRSRSERDVLLDEPPQGLYDAVRLRERPVSGQDGEPRSPPGPFD). The interval 43–66 (AVRLRERPVSGQDGEPRSPPGPFD) is disordered.

Belongs to the major facilitator superfamily. Vesicular transporter family. In terms of assembly, interacts with SEC14L1.

The protein resides in the cytoplasmic vesicle. The protein localises to the secretory vesicle. It is found in the synaptic vesicle membrane. It catalyses the reaction acetylcholine(out) + 2 H(+)(in) = acetylcholine(in) + 2 H(+)(out). The catalysed reaction is choline(in) + 2 H(+)(out) = choline(out) + 2 H(+)(in). It carries out the reaction serotonin(in) + 2 H(+)(out) = serotonin(out) + 2 H(+)(in). Functionally, electrogenic antiporter that exchanges one cholinergic neurotransmitter, acetylcholine or choline, with two intravesicular protons across the membrane of synaptic vesicles. Uses the electrochemical proton gradient established by the V-type proton-pump ATPase to store neurotransmitters inside the vesicles prior to their release via exocytosis. Determines cholinergic vesicular quantal size at presynaptic nerve terminals in developing neuro-muscular junctions with an impact on motor neuron differentiation and innervation pattern. Part of forebrain cholinergic system, regulates hippocampal synapse transmissions that underlie spatial memory formation. Can transport serotonin. The chain is Vesicular acetylcholine transporter (SLC18A3) from Macaca fuscata fuscata (Japanese macaque).